Here is a 280-residue protein sequence, read N- to C-terminus: MVPWFLLSLLLLARPVPGVAYSVSLPASFLEDVAGSGEAEGSSASSPSLPPPGTPAFSPTPERPQPTALDGPVPPTNLLEGIMDFFRQYVMLIAVVGSLTFLIMFIVCAALITRQKHKATAYYPSSFPEKKYVDQRDRAGGPRTFSEVPDRAPDSRHEEGLDTSHQLQADILAATQNLRSPARALPGNGEGAKPVKGGSEEEEEEVLSGQEEAQEAPVCGVTEEKLGVPEESVSAEAEGVPATSEGQGEAEGSFSLAQESQGATGPPESPCACNRVSPSV.

Residues 1-20 (MVPWFLLSLLLLARPVPGVA) form the signal peptide. Residues 21–91 (YSVSLPASFL…IMDFFRQYVM (71 aa)) are Extracellular-facing. An O-linked (Xyl...) (chondroitin sulfate) serine glycan is attached at Ser36. Over residues 38 to 47 (EAEGSSASSP) the composition is skewed to low complexity. Residues 38–73 (EAEGSSASSPSLPPPGTPAFSPTPERPQPTALDGPV) form a disordered region. A helical transmembrane segment spans residues 92-112 (LIAVVGSLTFLIMFIVCAALI). Residues 113–280 (TRQKHKATAY…CACNRVSPSV (168 aa)) lie on the Cytoplasmic side of the membrane. Disordered regions lie at residues 133 to 162 (VDQR…EGLD) and 181 to 280 (PARA…SPSV). Basic and acidic residues predominate over residues 148 to 162 (VPDRAPDSRHEEGLD). Ser269 carries the phosphoserine modification.

As to quaternary structure, interacts with SMAD1, SMAD5 and RUNX2. In terms of tissue distribution, expressed in spermatocytes and spermatids in the developing testis (at protein level). Expressed in the brain, heart, lung, spleen, skeletal muscle, ovary, testis and epididymis. Predominantly expressed in osteoblasts.

It localises to the cell membrane. It is found in the cytoplasm. Its subcellular location is the endoplasmic reticulum membrane. The protein localises to the secreted. Its function is as follows. Plays an important role in bone formation and normal bone mineralization. Promotes the differentiation of myoblasts into osteoblasts. May induce the commitment and differentiation of myoblasts into osteoblasts through an enhancement of BMP2 production and interaction with the BMP-RUNX2 pathway. Up-regulates the expression of ATF4 which plays a central role in osteoblast differentiation. Essential for normal spermatogenesis and late testicular differentiation. This chain is Transmembrane protein 119 (Tmem119), found in Mus musculus (Mouse).